The sequence spans 443 residues: Xaa-Pro dipeptidase (443 aa).

Mn(2+) is bound by residues D241, D252, H333, E378, and E417.

This sequence belongs to the peptidase M24B family. Bacterial-type prolidase subfamily. Mn(2+) is required as a cofactor.

The enzyme catalyses Xaa-L-Pro dipeptide + H2O = an L-alpha-amino acid + L-proline. Splits dipeptides with a prolyl residue in the C-terminal position. The polypeptide is Xaa-Pro dipeptidase (Actinobacillus pleuropneumoniae serotype 5b (strain L20)).